Consider the following 296-residue polypeptide: Bifunctional protein FolD (296 aa).

NADP(+) is bound by residues 168–170, S197, and T238; that span reads GRS.

The protein belongs to the tetrahydrofolate dehydrogenase/cyclohydrolase family. In terms of assembly, homodimer.

The catalysed reaction is (6R)-5,10-methylene-5,6,7,8-tetrahydrofolate + NADP(+) = (6R)-5,10-methenyltetrahydrofolate + NADPH. It carries out the reaction (6R)-5,10-methenyltetrahydrofolate + H2O = (6R)-10-formyltetrahydrofolate + H(+). Its pathway is one-carbon metabolism; tetrahydrofolate interconversion. In terms of biological role, catalyzes the oxidation of 5,10-methylenetetrahydrofolate to 5,10-methenyltetrahydrofolate and then the hydrolysis of 5,10-methenyltetrahydrofolate to 10-formyltetrahydrofolate. This chain is Bifunctional protein FolD, found in Porphyromonas gingivalis (strain ATCC BAA-308 / W83).